Consider the following 499-residue polypeptide: Ribulose bisphosphate carboxylase large chain (499 aa).

2 residues coordinate substrate: Asn-139 and Thr-189. The active-site Proton acceptor is Lys-191. Lys-193 lines the substrate pocket. Residues Lys-217, Asp-219, and Glu-220 each contribute to the Mg(2+) site. An N6-carboxylysine modification is found at Lys-217. The active-site Proton acceptor is the His-309. Substrate is bound by residues Arg-310, His-342, and Ser-394.

The protein belongs to the RuBisCO large chain family. Type I subfamily. In terms of assembly, heterohexadecamer of 8 large chains and 8 small chains. The cofactor is Mg(2+).

The enzyme catalyses 2 (2R)-3-phosphoglycerate + 2 H(+) = D-ribulose 1,5-bisphosphate + CO2 + H2O. It carries out the reaction D-ribulose 1,5-bisphosphate + O2 = 2-phosphoglycolate + (2R)-3-phosphoglycerate + 2 H(+). Its function is as follows. RuBisCO catalyzes two reactions: the carboxylation of D-ribulose 1,5-bisphosphate, the primary event in carbon dioxide fixation, as well as the oxidative fragmentation of the pentose substrate. Both reactions occur simultaneously and in competition at the same active site. The sequence is that of Ribulose bisphosphate carboxylase large chain from Paraburkholderia xenovorans (strain LB400).